Reading from the N-terminus, the 148-residue chain is Flavodoxin (148 aa).

Residues 4–145 (ALIVYGSTTG…DIVGWAHDVR (142 aa)) enclose the Flavodoxin-like domain.

Belongs to the flavodoxin family. It depends on FMN as a cofactor.

Low-potential electron donor to a number of redox enzymes. The protein is Flavodoxin of Nitratidesulfovibrio vulgaris (strain ATCC 29579 / DSM 644 / CCUG 34227 / NCIMB 8303 / VKM B-1760 / Hildenborough) (Desulfovibrio vulgaris).